Reading from the N-terminus, the 170-residue chain is Putative 4-hydroxy-4-methyl-2-oxoglutarate aldolase (170 aa).

Substrate contacts are provided by residues 81 to 84 and Arg-103; that span reads GDII. Asp-104 serves as a coordination point for a divalent metal cation.

This sequence belongs to the class II aldolase/RraA-like family. As to quaternary structure, homotrimer. A divalent metal cation serves as cofactor.

It catalyses the reaction 4-hydroxy-4-methyl-2-oxoglutarate = 2 pyruvate. The enzyme catalyses oxaloacetate + H(+) = pyruvate + CO2. In terms of biological role, catalyzes the aldol cleavage of 4-hydroxy-4-methyl-2-oxoglutarate (HMG) into 2 molecules of pyruvate. Also contains a secondary oxaloacetate (OAA) decarboxylase activity due to the common pyruvate enolate transition state formed following C-C bond cleavage in the retro-aldol and decarboxylation reactions. The chain is Putative 4-hydroxy-4-methyl-2-oxoglutarate aldolase from Corynebacterium efficiens (strain DSM 44549 / YS-314 / AJ 12310 / JCM 11189 / NBRC 100395).